The chain runs to 56 residues: DSLGREAKCNNNAGGCTKIYNPVCGTDGNTYPNECMLCVENQKRQMPVLIQRSGPC.

The Kazal-like domain occupies 3–56 (LGREAKCNNNAGGCTKIYNPVCGTDGNTYPNECMLCVENQKRQMPVLIQRSGPC). 3 disulfides stabilise this stretch: C9–C38, C16–C35, and C24–C56.

Its subcellular location is the secreted. Functionally, serine protease inhibitor which exhibits anti-trypsin activity. In the pancreas, protects against trypsin-catalyzed premature activation of zymogens. Its function is as follows. In the male reproductive tract, binds to sperm heads where it modulates sperm capacitance by inhibiting calcium uptake and nitrogen oxide (NO) production. The polypeptide is Serine protease inhibitor Kazal-type 1 (SPINK1) (Equus caballus (Horse)).